The following is a 292-amino-acid chain: 3-methyl-2-oxobutanoate hydroxymethyltransferase 2 (292 aa).

Mg(2+)-binding residues include Asp-52 and Asp-91. Residues 52-53, Asp-91, and Lys-120 contribute to the 3-methyl-2-oxobutanoate site; that span reads DS. Mg(2+) is bound at residue Glu-122. Glu-189 functions as the Proton acceptor in the catalytic mechanism.

Belongs to the PanB family. Homodecamer; pentamer of dimers. It depends on Mg(2+) as a cofactor.

It is found in the cytoplasm. It carries out the reaction 3-methyl-2-oxobutanoate + (6R)-5,10-methylene-5,6,7,8-tetrahydrofolate + H2O = 2-dehydropantoate + (6S)-5,6,7,8-tetrahydrofolate. The protein operates within cofactor biosynthesis; (R)-pantothenate biosynthesis; (R)-pantoate from 3-methyl-2-oxobutanoate: step 1/2. In terms of biological role, catalyzes the reversible reaction in which hydroxymethyl group from 5,10-methylenetetrahydrofolate is transferred onto alpha-ketoisovalerate to form ketopantoate. This is 3-methyl-2-oxobutanoate hydroxymethyltransferase 2 from Bradyrhizobium diazoefficiens (strain JCM 10833 / BCRC 13528 / IAM 13628 / NBRC 14792 / USDA 110).